A 274-amino-acid chain; its full sequence is Thiamine kinase (274 aa).

It belongs to the thiamine kinase family.

The enzyme catalyses thiamine + ATP = thiamine phosphate + ADP + H(+). Its pathway is cofactor biosynthesis; thiamine diphosphate biosynthesis; thiamine phosphate from thiamine: step 1/1. Catalyzes the ATP-dependent phosphorylation of thiamine to thiamine phosphate. Is involved in thiamine salvage. The sequence is that of Thiamine kinase from Salmonella gallinarum (strain 287/91 / NCTC 13346).